Here is a 416-residue protein sequence, read N- to C-terminus: MLKRDMNIADYDADLFAAIQEETVRQEEHIELIASENYTSPRVMEAQGSQLTNKYAEGYPGKRYYGGCEFVDKVETLAINRACELFGAEYANVQPHSGSQANNAVYMALLNAGDTVLGMSLAHGGHLTHGSPVNFSGKLYNIIPYGIDEAGQIDYEEMEALAIEHKPKMIIGGFSAYSQICDWARMREIADKVGAYFFVDMAHVAGLIAAGVYPNPVPHAHVVTTTTHKTLAGPRGGLILSNEGEDLYKKLNSAVFPGGQGGPLMHVIAGKAVAFKEALEPEFKEYQVRVVANAKAMVAEFLARGYNIVSGSTENHLFLVDLIDKDITGKEADAALGSANITVNKNSVPNDPRSPFVTSGIRVGSPSITRRGFSEEDAKNLAGWMCDILDNMGDESVIEATKAKVLEICKRLPVYA.

(6S)-5,6,7,8-tetrahydrofolate contacts are provided by residues Leu-121 and Gly-125 to Leu-127. Lys-229 carries the post-translational modification N6-(pyridoxal phosphate)lysine. Residues Glu-245 and Ser-354–Phe-356 each bind (6S)-5,6,7,8-tetrahydrofolate.

This sequence belongs to the SHMT family. In terms of assembly, homodimer. Pyridoxal 5'-phosphate is required as a cofactor.

It localises to the cytoplasm. The catalysed reaction is (6R)-5,10-methylene-5,6,7,8-tetrahydrofolate + glycine + H2O = (6S)-5,6,7,8-tetrahydrofolate + L-serine. The protein operates within one-carbon metabolism; tetrahydrofolate interconversion. It functions in the pathway amino-acid biosynthesis; glycine biosynthesis; glycine from L-serine: step 1/1. Catalyzes the reversible interconversion of serine and glycine with tetrahydrofolate (THF) serving as the one-carbon carrier. This reaction serves as the major source of one-carbon groups required for the biosynthesis of purines, thymidylate, methionine, and other important biomolecules. Also exhibits THF-independent aldolase activity toward beta-hydroxyamino acids, producing glycine and aldehydes, via a retro-aldol mechanism. The sequence is that of Serine hydroxymethyltransferase from Aliivibrio salmonicida (strain LFI1238) (Vibrio salmonicida (strain LFI1238)).